The primary structure comprises 364 residues: O-methyltransferase ZRP4 (364 aa).

S-adenosyl-L-methionine is bound by residues Gly208, Asp231, Asp251, Met252, and Lys265. The Proton acceptor role is filled by His269.

Belongs to the class I-like SAM-binding methyltransferase superfamily. Cation-independent O-methyltransferase family. COMT subfamily. Homodimer. Accumulates preferentially in the roots and is located predominantly in the region of the endodermis, low levels are seen in the leaves, stems and other shoot organs.

In terms of biological role, may be involved in the O-methylation of suberin phenylpropanoid precursors. This is O-methyltransferase ZRP4 (ZRP4) from Zea mays (Maize).